The following is a 1564-amino-acid chain: NACHT domain- and WD repeat-containing protein 1 (1564 aa).

The 327-residue stretch at 335–661 (TPLVLFGPPG…LLAIAHRQLV (327 aa)) folds into the NACHT domain. 341 to 348 (GPPGIGKT) lines the ATP pocket. WD repeat units lie at residues 866–905 (GCHKGITAMAWGVEEKLLVIGTQDGIMAVWDMEEQHVIHM), 908–947 (GHTGEVRCVKIFAKGTLANSASKDYTLHLWNLLSGQEKFT), 956–994 (PAEPQIWNLHVDEAHKVVYSASGSKINAWNLETAEPVFH), 998–1037 (DASDPWMCMAVLASQATLLTVSRDGVVSLWSSATGKLQGK), 1044–1082 (KEETPTCAVSVQKQGKLVTGFSNGSISLVSSKGDRLLEK), 1083–1121 (LPDAVRFLVVSEDESLLAAGFGRSVRIFLADSRGFRRFM), 1126–1165 (EHEDMVETAVFGTENNLIITGSLDALIQVWSLSEQGTLLD), 1167–1207 (LEGV…RSRV), 1212–1251 (LDRTGLTAVSHNGSYVYFPKIGDKNKVTIWDLAEGEEQDS), 1253–1290 (DTSSEIRCLEVAEQRKLLFTGLVSGVVLVFPLNSRQDV), 1291–1327 (ICIPPPEARKAINCMSLSKCEDRLAIAYDNIVLVLDI), 1338–1376 (GPRYTFYTQLPETLSSVAILTDYRVVYSMTNGDLFLYEC), 1380–1418 (KAFPLETHRSRVACVEVSHKEQLVVSGSEDALLCLWDLQ), and 1425–1462 (EMSYTSSYCRGVQCACFSKDDKYVYVGLKDRSILVWSV).

In terms of assembly, may interact with HSP90AA1, HSP90AB1 and BAG2. Expressed at highest levels in prostate, followed by testis, retina, trachea and optic nerve. Also detected in brain, epididymis, lung, vagina and pituitary. In the prostate, tends to be up-regulated during malignant progression compared to normal epithelium (at protein level).

The protein resides in the cytoplasm. Its subcellular location is the cytosol. May play a role in the control of androgen receptor (AR) protein steady-state levels. The protein is NACHT domain- and WD repeat-containing protein 1 (NWD1) of Homo sapiens (Human).